The primary structure comprises 583 residues: Bifunctional dihydrofolate reductase-thymidylate synthase (583 aa).

A DHFR domain is found at 9 to 229 (DIYAICACCK…TTLDFVIYSK (221 aa)). Residue 36–42 (GLGNEGG) coordinates NADP(+). Substrate is bound at residue Asp-51. Residues 104–106 (KAS) and 125–128 (LSRT) each bind NADP(+). Positions 165, 171, and 186 each coordinate substrate. 166–173 (GGASVYKE) is a binding site for NADP(+). Residues 298 to 583 (HPEYQYLNII…HDKISMDMAA (286 aa)) are thymidylate synthase. Arg-320 lines the dUMP pocket. The active site involves Cys-465. Residues His-466, 484 to 488 (QRSCD), Asn-496, and 526 to 528 (HVY) each bind dUMP.

It in the N-terminal section; belongs to the dihydrofolate reductase family. The protein in the C-terminal section; belongs to the thymidylate synthase family. Homodimer.

It carries out the reaction (6S)-5,6,7,8-tetrahydrofolate + NADP(+) = 7,8-dihydrofolate + NADPH + H(+). The enzyme catalyses dUMP + (6R)-5,10-methylene-5,6,7,8-tetrahydrofolate = 7,8-dihydrofolate + dTMP. The protein operates within cofactor biosynthesis; tetrahydrofolate biosynthesis; 5,6,7,8-tetrahydrofolate from 7,8-dihydrofolate: step 1/1. Its function is as follows. Bifunctional enzyme. Involved in de novo dTMP biosynthesis. Key enzyme in folate metabolism. Catalyzes an essential reaction for de novo glycine and purine synthesis, DNA precursor synthesis, and for the conversion of dUMP to dTMP. The chain is Bifunctional dihydrofolate reductase-thymidylate synthase from Plasmodium chabaudi.